Consider the following 555-residue polypeptide: CTP synthase (555 aa).

Residues 1 to 271 (MVKRGKKTKY…DDKLAELFNI (271 aa)) are amidoligase domain. Serine 19 contacts CTP. Serine 19 is a binding site for UTP. ATP contacts are provided by residues 20 to 25 (SLGKGL) and aspartate 77. Residues aspartate 77 and glutamate 145 each contribute to the Mg(2+) site. CTP contacts are provided by residues 152–154 (DIE), 192–197 (KTKPTQ), and lysine 228. UTP is bound by residues 192–197 (KTKPTQ) and lysine 228. The Glutamine amidotransferase type-1 domain maps to 297 to 537 (RIGIVGKYVE…VKAALEHRDA (241 aa)). An L-glutamine-binding site is contributed by glycine 358. Cysteine 385 acts as the Nucleophile; for glutamine hydrolysis in catalysis. L-glutamine-binding positions include 386 to 389 (LGLQ), glutamate 409, and arginine 466. Active-site residues include histidine 510 and glutamate 512. Residues 535–555 (RDAQQRQPPAEVKKLAVGKNG) form a disordered region.

Belongs to the CTP synthase family. Homotetramer.

The enzyme catalyses UTP + L-glutamine + ATP + H2O = CTP + L-glutamate + ADP + phosphate + 2 H(+). It catalyses the reaction L-glutamine + H2O = L-glutamate + NH4(+). It carries out the reaction UTP + NH4(+) + ATP = CTP + ADP + phosphate + 2 H(+). The protein operates within pyrimidine metabolism; CTP biosynthesis via de novo pathway; CTP from UDP: step 2/2. Allosterically activated by GTP, when glutamine is the substrate; GTP has no effect on the reaction when ammonia is the substrate. The allosteric effector GTP functions by stabilizing the protein conformation that binds the tetrahedral intermediate(s) formed during glutamine hydrolysis. Inhibited by the product CTP, via allosteric rather than competitive inhibition. Its function is as follows. Catalyzes the ATP-dependent amination of UTP to CTP with either L-glutamine or ammonia as the source of nitrogen. Regulates intracellular CTP levels through interactions with the four ribonucleotide triphosphates. This chain is CTP synthase, found in Anaeromyxobacter sp. (strain K).